The primary structure comprises 945 residues: Leucine--tRNA ligase (945 aa).

A 'HIGH' region motif is present at residues 43-53 (PYPNGAVHIGH). The 'KMSKS' region motif lies at 638–642 (KMSKS). Lysine 641 is an ATP binding site.

This sequence belongs to the class-I aminoacyl-tRNA synthetase family.

It localises to the cytoplasm. The enzyme catalyses tRNA(Leu) + L-leucine + ATP = L-leucyl-tRNA(Leu) + AMP + diphosphate. The sequence is that of Leucine--tRNA ligase from Pyrobaculum islandicum (strain DSM 4184 / JCM 9189 / GEO3).